The primary structure comprises 172 residues: Myosin regulatory light polypeptide 9 (172 aa).

The span at 1–16 (MSSKRAKAKTTKKRPQ) shows a compositional bias: basic residues. A disordered region spans residues 1–20 (MSSKRAKAKTTKKRPQRATS). Position 2 is an N-acetylserine (Ser2). Thr19 is subject to Phosphothreonine; by MLCK, CIT and ROCK2. Ser20 is modified (phosphoserine; by CDC42BP, CIT, MLCK, PAK1, ROCK1, ROCK2, DAPK1, DAPK2 and ZIPK/DAPK3). EF-hand domains follow at residues 29 to 64 (SQIQ…LGKN), 98 to 133 (DPED…MGDR), and 134 to 169 (FTDE…GAKD). Residues Asp42, Asn44, Asp46, and Asp53 each contribute to the Ca(2+) site.

As to quaternary structure, myosin is a hexamer of 2 heavy chains and 4 light chains: interacts with myosin heavy chain MYO19. Interacts with LUZP1; the interaction results in inhibition of phosphorylation of MYL9 by DAPK3. Phosphorylation increases the actin-activated myosin ATPase activity and thereby regulates the contractile activity. It is required to generate the driving force in the migration of the cells but not necessary for localization of myosin-2 at the leading edge. Phosphorylation is required for myotube formation. Phosphorylated by DAPK3; DAPK3-mediated phosphorylation is inhibited by LUZP1. As to expression, smooth muscle tissues and in some, but not all, nonmuscle cells.

Its subcellular location is the cytoplasm. The protein resides in the cytoskeleton. It is found in the cell cortex. Its function is as follows. Myosin regulatory subunit that plays an important role in regulation of both smooth muscle and nonmuscle cell contractile activity via its phosphorylation. Implicated in cytokinesis, receptor capping, and cell locomotion. In myoblasts, may regulate PIEZO1-dependent cortical actomyosin assembly involved in myotube formation. This is Myosin regulatory light polypeptide 9 (MYL9) from Homo sapiens (Human).